Here is a 209-residue protein sequence, read N- to C-terminus: Small ribosomal subunit protein uS4 (209 aa).

The disordered stretch occupies residues 22 to 45; that stretch reads RGRNPLLRKPNPPGQHGMQRKKKS. Residues 93 to 154 form the S4 RNA-binding domain; sequence CRLDNIVYRL…KSKRLAIVTE (62 aa).

Belongs to the universal ribosomal protein uS4 family. In terms of assembly, part of the 30S ribosomal subunit. Contacts protein S5. The interaction surface between S4 and S5 is involved in control of translational fidelity.

In terms of biological role, one of the primary rRNA binding proteins, it binds directly to 16S rRNA where it nucleates assembly of the body of the 30S subunit. Functionally, with S5 and S12 plays an important role in translational accuracy. In Chlamydia trachomatis serovar A (strain ATCC VR-571B / DSM 19440 / HAR-13), this protein is Small ribosomal subunit protein uS4.